The chain runs to 71 residues: Large ribosomal subunit protein bL31 (71 aa).

Zn(2+) is bound by residues C16, C18, C37, and C40.

It belongs to the bacterial ribosomal protein bL31 family. Type A subfamily. In terms of assembly, part of the 50S ribosomal subunit. Zn(2+) is required as a cofactor.

Binds the 23S rRNA. The sequence is that of Large ribosomal subunit protein bL31 from Pseudomonas putida (strain W619).